The primary structure comprises 160 residues: Transcription elongation factor GreB (160 aa).

It belongs to the GreA/GreB family. GreB subfamily.

Necessary for efficient RNA polymerase transcription elongation past template-encoded arresting sites. The arresting sites in DNA have the property of trapping a certain fraction of elongating RNA polymerases that pass through, resulting in locked ternary complexes. Cleavage of the nascent transcript by cleavage factors such as GreA or GreB allows the resumption of elongation from the new 3'terminus. GreB releases sequences of up to 9 nucleotides in length. This chain is Transcription elongation factor GreB, found in Vibrio vulnificus (strain CMCP6).